Here is a 311-residue protein sequence, read N- to C-terminus: Olfactory receptor-like protein OLF1 (311 aa).

Topologically, residues Met-1–Ile-24 are extracellular. An N-linked (GlcNAc...) asparagine glycan is attached at Asn-4. A helical membrane pass occupies residues Val-25–Ile-48. The Cytoplasmic segment spans residues Arg-49–Thr-56. The helical transmembrane segment at Pro-57–Pro-78 threads the bilayer. Over Lys-79 to Gln-99 the chain is Extracellular. Residues Phe-100–Tyr-119 form a helical membrane-spanning segment. At Asp-120–Gly-138 the chain is on the cytoplasmic side. A helical membrane pass occupies residues Ile-139–Val-157. At His-158 to Glu-195 the chain is on the extracellular side. A helical membrane pass occupies residues Trp-196–Tyr-218. Residues Phe-219 to Lys-235 are Cytoplasmic-facing. Residues Thr-236 to Ser-259 traverse the membrane as a helical segment. The Extracellular segment spans residues Arg-260–Lys-271. Residues Ile-272 to Leu-291 form a helical membrane-spanning segment. Topologically, residues Arg-292 to Ser-311 are cytoplasmic.

It belongs to the G-protein coupled receptor 1 family.

It localises to the cell membrane. Functionally, putative odorant or sperm cell receptor. The polypeptide is Olfactory receptor-like protein OLF1 (Canis lupus familiaris (Dog)).